We begin with the raw amino-acid sequence, 244 residues long: Probable transcriptional regulatory protein CHY_1525 (244 aa).

This sequence belongs to the TACO1 family.

The protein resides in the cytoplasm. The protein is Probable transcriptional regulatory protein CHY_1525 of Carboxydothermus hydrogenoformans (strain ATCC BAA-161 / DSM 6008 / Z-2901).